The chain runs to 907 residues: Protein translocase subunit SecA (907 aa).

ATP contacts are provided by residues Gln-87, 105-109 (GEGKT), and Asp-512. Residues Cys-891, Cys-893, Cys-902, and His-903 each contribute to the Zn(2+) site.

Belongs to the SecA family. Monomer and homodimer. Part of the essential Sec protein translocation apparatus which comprises SecA, SecYEG and auxiliary proteins SecDF-YajC and YidC. Zn(2+) is required as a cofactor.

It localises to the cell inner membrane. Its subcellular location is the cytoplasm. It catalyses the reaction ATP + H2O + cellular proteinSide 1 = ADP + phosphate + cellular proteinSide 2.. Functionally, part of the Sec protein translocase complex. Interacts with the SecYEG preprotein conducting channel. Has a central role in coupling the hydrolysis of ATP to the transfer of proteins into and across the cell membrane, serving both as a receptor for the preprotein-SecB complex and as an ATP-driven molecular motor driving the stepwise translocation of polypeptide chains across the membrane. The polypeptide is Protein translocase subunit SecA (Tolumonas auensis (strain DSM 9187 / NBRC 110442 / TA 4)).